The sequence spans 3601 residues: Protein SPIRRIG (3601 aa).

7 disordered regions span residues 17–50 (AQSS…PSSS), 398–426 (SSNH…ADFS), 449–476 (PAEP…TSSV), 638–657 (QYSG…SFRK), 1954–1993 (HIND…SLGS), 2009–2049 (ENIL…DFQD), and 2715–2747 (TTHV…EKEL). A compositionally biased stretch (low complexity) spans 32–50 (PPSSSSSSSSPSFTYPSSS). Polar residues-rich tracts occupy residues 416 to 426 (NTNSTENADFS) and 458 to 476 (SRSS…TSSV). The span at 1974 to 1991 (STKTSISVGSFPQGQVSL) shows a compositional bias: polar residues. Over residues 2027–2048 (EDVKKQDDHHVGPSASSERDFQ) the composition is skewed to basic and acidic residues. Polar residues predominate over residues 2715–2731 (TTHVKSETGSPRHSSSA). Over residues 2732 to 2747 (KMDETNGREEKSEKEL) the composition is skewed to basic and acidic residues. Residues 2760–2927 (EHLEKIRFRY…EREEVFKNLV (168 aa)) enclose the BEACH-type PH domain. Residues 2952–3244 (GGRLFKLMAK…QLFPKAHVKR (293 aa)) enclose the BEACH domain. 4 WD repeats span residues 3328–3367 (HESN…PRGS), 3378–3417 (AHTA…FVRQ), 3464–3507 (PSDS…DPVS), and 3540–3579 (FHKQ…LRAS).

Interacts with DCP1. In terms of tissue distribution, expressed in flowers, leaves, stems, hypocotyls and roots.

It localises to the cytoplasm. The protein resides in the P-body. Involved in cell morphogenesis. May have a function in membrane fusion or membrane composition. Required for salt stress tolerance. Regulates the salt stress-dependent post-transcriptional stabilization, cytoplasmic agglomeration, and localization to P-bodies of a subset of salt stress-regulated mRNAs. This chain is Protein SPIRRIG, found in Arabidopsis thaliana (Mouse-ear cress).